Reading from the N-terminus, the 70-residue chain is Brevinin-1S (70 aa).

The signal sequence occupies residues 1 to 22 (MFTLKKSLLLLFFLGTINLSLC). Positions 23 to 44 (EEERNAEEERRDDPEERDVEVE) are excised as a propeptide. C64 and C70 are joined by a disulfide.

It belongs to the frog skin active peptide (FSAP) family. Brevinin subfamily. In terms of tissue distribution, expressed by the skin glands.

The protein resides in the secreted. In terms of biological role, antimicrobial peptide. In Odorrana schmackeri (Schmacker's frog), this protein is Brevinin-1S.